A 360-amino-acid chain; its full sequence is Phospho-N-acetylmuramoyl-pentapeptide-transferase (360 aa).

10 helical membrane passes run 20–40 (YITF…FFFG), 71–91 (TPTM…LLWA), 93–113 (LDNG…AIGF), 134–154 (LLIG…LHPA), 168–188 (ALIN…LGAA), 199–219 (GLAI…AYMV), 239–259 (LAVF…YNAP), 263–283 (VFMG…IAVV), 288–308 (IVLA…IIQV), and 337–357 (QIVI…LATL).

It belongs to the glycosyltransferase 4 family. MraY subfamily. It depends on Mg(2+) as a cofactor.

It is found in the cell inner membrane. It catalyses the reaction UDP-N-acetyl-alpha-D-muramoyl-L-alanyl-gamma-D-glutamyl-meso-2,6-diaminopimeloyl-D-alanyl-D-alanine + di-trans,octa-cis-undecaprenyl phosphate = di-trans,octa-cis-undecaprenyl diphospho-N-acetyl-alpha-D-muramoyl-L-alanyl-D-glutamyl-meso-2,6-diaminopimeloyl-D-alanyl-D-alanine + UMP. It functions in the pathway cell wall biogenesis; peptidoglycan biosynthesis. Functionally, catalyzes the initial step of the lipid cycle reactions in the biosynthesis of the cell wall peptidoglycan: transfers peptidoglycan precursor phospho-MurNAc-pentapeptide from UDP-MurNAc-pentapeptide onto the lipid carrier undecaprenyl phosphate, yielding undecaprenyl-pyrophosphoryl-MurNAc-pentapeptide, known as lipid I. The polypeptide is Phospho-N-acetylmuramoyl-pentapeptide-transferase (Paracoccus denitrificans (strain Pd 1222)).